Here is a 21-residue protein sequence, read N- to C-terminus: Nigrocin-2 (21 aa).

A disulfide bond links Cys-15 and Cys-21.

In terms of tissue distribution, expressed by the skin dorsal glands.

The protein resides in the secreted. Its function is as follows. Thanks to its single linear amphipathic alpha-helix, may integrate into membrane phospholipids, leading to lysis of the membrane. Shows antibacterial activity against both Gram-positive and Gram-negative bacteria and against the fungus C.albicans. Has no hemolytic activity. The polypeptide is Nigrocin-2 (Pelophylax nigromaculatus (Black-spotted frog)).